The primary structure comprises 346 residues: MLKVAINGFGRIGRNVLRAVYESGKHQQIKVVAVNELAQPEAMAHLLQYDTSHGRFGKRISHDQEHLYVHHDACPQGKGEFDSIRILHLSEINLLPWRDLEVDLVLDCTGVFGCQADGLEHIKAGAKKVLFSHPGASDLDNTIIYGVNHETLKAEHNVVSNGSCTTNCIVPIIKVLDEAFGIESGTITTIHSSMNDQQVIDAYHSDLRRTRAASQSIIPVDTKLHKGIERIFPKFSNKFEAISVRVPTVNVTAMDLSVTINTNVKVNDVNQTIVNASQCTLRGIVDYTEAPLVSIDFNHDPHSAIVDGSQTRVSNGHLVKMLVWCDNEWGFANRMLDTALAMQAAQ.

11 to 12 is an NAD(+) binding site; sequence RI. Residues 163-165, R209, 222-223, and R245 contribute to the substrate site; these read SCT and TK. C164 functions as the Nucleophile in the catalytic mechanism. N327 is an NAD(+) binding site.

This sequence belongs to the glyceraldehyde-3-phosphate dehydrogenase family. Epd subfamily. In terms of assembly, homotetramer.

It localises to the cytoplasm. It carries out the reaction D-erythrose 4-phosphate + NAD(+) + H2O = 4-phospho-D-erythronate + NADH + 2 H(+). The protein operates within cofactor biosynthesis; pyridoxine 5'-phosphate biosynthesis; pyridoxine 5'-phosphate from D-erythrose 4-phosphate: step 1/5. Functionally, catalyzes the NAD-dependent conversion of D-erythrose 4-phosphate to 4-phosphoerythronate. The sequence is that of D-erythrose-4-phosphate dehydrogenase from Vibrio vulnificus (strain CMCP6).